The chain runs to 239 residues: Adapter protein MecA (239 aa).

A compositionally biased stretch (basic and acidic residues) spans 118-128 (EQRTKEKEAQG). The interval 118–137 (EQRTKEKEAQGSKRQKSSAR) is disordered.

This sequence belongs to the MecA family. As to quaternary structure, homodimer.

Functionally, enables the recognition and targeting of unfolded and aggregated proteins to the ClpC protease or to other proteins involved in proteolysis. This chain is Adapter protein MecA, found in Staphylococcus aureus (strain COL).